A 423-amino-acid chain; its full sequence is MDIDQYMTDVGRRARRASREIARASTAAKNAALEAVARAIGRDADALKAANARDVARAKDKGHDAAFVDRLTLSDKALKTMIEGLRQVATLADPIGEMSNLKYRPSGIQVGQMRVPLGVIGIIYESRPNVTIDAAALCLKSGNATILRGGSEALESNTALAKLIGEGLAAAGLSQDAVQVVGTADRAAVGKLITMTEYVDVIVPRGGKSLIERLINEARVPMIKHLDGICHVYVDDRASVAKALAVCDNAKTHRYGTCNTMETLLVARGIAPAVLTPLGRLYREKGVELRVDADARAVLEAAGVGPLVDATDEDWRTEYLAPVLAIKIVDGIDAAIEHINEYGSHHTDAIVTEDHDRAMRFLREVDSASVMVNASTRFADGFEFGLGAEIGISNDKLHARGPVGLEGLTSLKYVVLGHGEGRE.

This sequence belongs to the gamma-glutamyl phosphate reductase family.

The protein resides in the cytoplasm. It catalyses the reaction L-glutamate 5-semialdehyde + phosphate + NADP(+) = L-glutamyl 5-phosphate + NADPH + H(+). It functions in the pathway amino-acid biosynthesis; L-proline biosynthesis; L-glutamate 5-semialdehyde from L-glutamate: step 2/2. Its function is as follows. Catalyzes the NADPH-dependent reduction of L-glutamate 5-phosphate into L-glutamate 5-semialdehyde and phosphate. The product spontaneously undergoes cyclization to form 1-pyrroline-5-carboxylate. This is Gamma-glutamyl phosphate reductase from Burkholderia pseudomallei (strain 1710b).